The following is a 650-amino-acid chain: Acetyl-coenzyme A synthetase (650 aa).

CoA is bound by residues 191–194, Thr-311, and Asn-335; that span reads RAGR. ATP is bound by residues 387–389, 411–416, Asp-500, and Arg-515; these read GEP and DTWWQT. Ser-523 serves as a coordination point for CoA. Residue Arg-526 participates in ATP binding. Val-537, His-539, and Val-542 together coordinate Mg(2+). Arg-584 contacts CoA. Lys-609 carries the post-translational modification N6-acetyllysine.

This sequence belongs to the ATP-dependent AMP-binding enzyme family. Mg(2+) serves as cofactor. Post-translationally, acetylated. Deacetylation by the SIR2-homolog deacetylase activates the enzyme.

It catalyses the reaction acetate + ATP + CoA = acetyl-CoA + AMP + diphosphate. Its function is as follows. Catalyzes the conversion of acetate into acetyl-CoA (AcCoA), an essential intermediate at the junction of anabolic and catabolic pathways. AcsA undergoes a two-step reaction. In the first half reaction, AcsA combines acetate with ATP to form acetyl-adenylate (AcAMP) intermediate. In the second half reaction, it can then transfer the acetyl group from AcAMP to the sulfhydryl group of CoA, forming the product AcCoA. The sequence is that of Acetyl-coenzyme A synthetase from Shewanella halifaxensis (strain HAW-EB4).